The following is a 99-amino-acid chain: Plastocyanin (99 aa).

The region spanning 1-99 is the Plastocyanin-like domain; sequence AEVLLGSSDG…AGMVGKVTVN (99 aa). Cu cation is bound by residues H37, C84, H87, and M92.

This sequence belongs to the plastocyanin family. It depends on Cu(2+) as a cofactor.

It localises to the plastid. The protein resides in the chloroplast thylakoid membrane. Participates in electron transfer between P700 and the cytochrome b6-f complex in photosystem I. The polypeptide is Plastocyanin (PETE) (Lactuca sativa (Garden lettuce)).